The primary structure comprises 83 residues: Hainantoxin-III 4 (83 aa).

Positions 1 to 21 (MKASMYLALAGLVLLFVVGYA) are cleaved as a signal peptide. Positions 22–48 (SESEEKEFPRELLSKIFAVDDFKGKER) are excised as a propeptide. Cystine bridges form between Cys50/Cys65, Cys57/Cys70, and Cys64/Cys77. Leu81 is modified (leucine amide).

The protein belongs to the neurotoxin 10 (Hwtx-1) family. 15 (Hntx-3) subfamily. In terms of assembly, monomer. In terms of tissue distribution, expressed by the venom gland.

Its subcellular location is the secreted. Functionally, selective antagonist of neuronal tetrodotoxin (TTX)-sensitive voltage-gated sodium channels (IC(50)=1270 nM on Nav1.1/SCN1A, 270 nM on Nav1.2/SCN2A, 491 nM on Nav1.3/SCN3A and 232 nM on Nav1.7/SCN9A). This toxin suppress Nav1.7 current amplitude without significantly altering the activation, inactivation, and repriming kinetics. Short extreme depolarizations partially activate the toxin-bound channel, indicating voltage-dependent inhibition of this toxin. This toxin increases the deactivation of the Nav1.7 current after extreme depolarizations. The toxin-Nav1.7 complex is gradually dissociated upon prolonged strong depolarizations in a voltage-dependent manner, and the unbound toxin rebinds to Nav1.7 after a long repolarization. Moreover, analysis of chimeric channels showed that the DIIS3-S4 linker is critical for toxin binding to Nav1.7. These data are consistent with this toxin interacting with Nav1.7 site 4 and trapping the domain II voltage sensor in the closed state. In Cyriopagopus hainanus (Chinese bird spider), this protein is Hainantoxin-III 4.